A 1099-amino-acid chain; its full sequence is Exonuclease/helicase subunit RexB (1099 aa).

[4Fe-4S] cluster is bound by residues C766, C1056, C1059, and C1065.

This sequence belongs to the helicase family. AddB/RexB type 2 subfamily. As to quaternary structure, heterodimer of RexA (AddA) and RexB. Requires Mg(2+) as cofactor. It depends on [4Fe-4S] cluster as a cofactor.

Its function is as follows. The heterodimer acts both as an ATP-dependent DNA helicase and an ATP-dependent, dual-direction single-stranded exonuclease. Recognizes the L.lactis chi site (5'-GCGCGTG-3'), which stimulates homologous recombination. This subunit has 5'-&gt;3' exonuclease activity. The heterodimer acts as both an ATP-dependent DNA helicase and an ATP-dependent, dual-direction single-stranded exonuclease. Recognizes the chi site generating a DNA molecule suitable for the initiation of homologous recombination. This subunit has 5' -&gt; 3' nuclease activity but not helicase activity. The protein is Exonuclease/helicase subunit RexB of Lactococcus lactis subsp. cremoris (strain MG1363).